The chain runs to 123 residues: Altered inheritance of mitochondria protein 4 (123 aa).

The span at 1–16 (MDQKKDPSNNLTERRV) shows a compositional bias: basic and acidic residues. The tract at residues 1–42 (MDQKKDPSNNLTERRVSKVQRPNKKKVRNQVESLSRNLERNK) is disordered. Basic residues predominate over residues 17-28 (SKVQRPNKKKVR).

The protein belongs to the AIM4 family. In terms of assembly, may interact with the nuclear pore complex.

The protein resides in the cytoplasm. This Saccharomyces cerevisiae (strain ATCC 204508 / S288c) (Baker's yeast) protein is Altered inheritance of mitochondria protein 4 (AIM4).